The following is a 346-amino-acid chain: tRNA N6-adenosine threonylcarbamoyltransferase (346 aa).

Residues histidine 117 and histidine 121 each coordinate Fe cation. Substrate is bound by residues 139 to 143 (VVSGG), aspartate 172, glycine 185, aspartate 189, and asparagine 278. A Fe cation-binding site is contributed by aspartate 307.

Belongs to the KAE1 / TsaD family. May form a heterodimer with TsaB. Fe(2+) serves as cofactor.

It is found in the cytoplasm. The catalysed reaction is L-threonylcarbamoyladenylate + adenosine(37) in tRNA = N(6)-L-threonylcarbamoyladenosine(37) in tRNA + AMP + H(+). Functionally, required for the formation of a threonylcarbamoyl group on adenosine at position 37 (t(6)A37) in tRNAs that read codons beginning with adenine. Is involved in the transfer of the threonylcarbamoyl moiety of threonylcarbamoyl-AMP (TC-AMP) to the N6 group of A37, together with TsaE and TsaB; this reaction does not require ATP in vitro. TsaD likely plays a direct catalytic role in this reaction. In Bacillus subtilis (strain 168), this protein is tRNA N6-adenosine threonylcarbamoyltransferase.